Here is a 100-residue protein sequence, read N- to C-terminus: Pancreatic polypeptide prohormone (100 aa).

An N-terminal signal peptide occupies residues Met-1–Gly-29. Residue Tyr-65 is modified to Tyrosine amide.

This sequence belongs to the NPY family. Post-translationally, no icosapeptide-like peptide is cleaved from the C-terminal.

The protein localises to the secreted. Its function is as follows. Hormone secreted by pancreatic cells that acts as a regulator of pancreatic and gastrointestinal functions probably by signaling through the G protein-coupled receptor NPY4R2. In Mus musculus (Mouse), this protein is Pancreatic polypeptide prohormone (Ppy).